A 505-amino-acid chain; its full sequence is MEGAGRDGNPLGGYRIGKTLGIGSFGKVKIAEHILTGHKVAIKILNRRKIKSMEMEEKVKREIKILRLFMHPHIIRLYEVIDTPADIYVVMEYVKSGELFDYIVEKGRLQEEEARRFFQQIISGVEYCHRNMVVHRDLKPENLLLDSKCNVKIADFGLSNVMRDGHFLKTSCGSPNYAAPEVISGKLYAGPEVDVWSCGVILYALLCGTLPFDDENIPNLFKKIKGGIYTLPSHLSPLARDLIPRMLVVDPMKRITIREIREHQWFTVGLPRYLAVPPPDTAQQVKKLDDETLNDVINMGFDKNQLIESLHKRLQNEATVAYYLLLDNRLRTTSGYLGAEFHESMESSLAQVTPAETPNSATDHRQHGHMESPGFGLRHHFAADRKWALGLQSRAHPREIITEVLKALQELNVCWKKIGHYNMKCRWSPSFPSHESMMHNNHGFGAESAIIETDDSEKSTHTVKFEIQLYKTRDEKYLLDLQRVSGPQLLFLDLCSAFLTQLRVL.

The Protein kinase domain occupies 14–266 (YRIGKTLGIG…IREIREHQWF (253 aa)). ATP-binding positions include 20-28 (LGIGSFGKV) and Lys43. The active-site Proton acceptor is Asp137. The region spanning 287–327 (KLDDETLNDVINMGFDKNQLIESLHKRLQNEATVAYYLLLD) is the UBA domain. Polar residues predominate over residues 347–361 (SSLAQVTPAETPNSA). The interval 347–372 (SSLAQVTPAETPNSATDHRQHGHMES) is disordered. One can recognise a KA1 domain in the interval 456-504 (SEKSTHTVKFEIQLYKTRDEKYLLDLQRVSGPQLLFLDLCSAFLTQLRV).

This sequence belongs to the protein kinase superfamily. Ser/Thr protein kinase family. Expressed in young roots, young shoots, flowers, and immature seeds. Mostly expressed in leaf sheaths and roots, and to a lower extent, in germinating seeds, leaf blades and panicles.

The protein resides in the nucleus. The enzyme catalyses L-seryl-[protein] + ATP = O-phospho-L-seryl-[protein] + ADP + H(+). The catalysed reaction is L-threonyl-[protein] + ATP = O-phospho-L-threonyl-[protein] + ADP + H(+). Functionally, serine/threonine-protein kinase involved in sugar signaling during germination and seedling growth. Negative regulators of sugar response complex (SRC) in alpha-amylase gene promoters, thus relieving SRC sugar repression in a MYBS1-dependent manner. Required for MYBS1 and AAMY3 accumulation under glucose starvation. The chain is Serine/threonine protein kinase OSK1 from Oryza sativa subsp. japonica (Rice).